The sequence spans 125 residues: Large ribosomal subunit protein bL12 (125 aa).

The protein belongs to the bacterial ribosomal protein bL12 family. In terms of assembly, homodimer. Part of the ribosomal stalk of the 50S ribosomal subunit. Forms a multimeric L10(L12)X complex, where L10 forms an elongated spine to which 2 to 4 L12 dimers bind in a sequential fashion. Binds GTP-bound translation factors.

Its function is as follows. Forms part of the ribosomal stalk which helps the ribosome interact with GTP-bound translation factors. Is thus essential for accurate translation. In Porphyromonas gingivalis (strain ATCC 33277 / DSM 20709 / CIP 103683 / JCM 12257 / NCTC 11834 / 2561), this protein is Large ribosomal subunit protein bL12.